A 507-amino-acid chain; its full sequence is Keratin, type II cuticular Hb5 (507 aa).

A head region spans residues 1-123; the sequence is MSCRSYRISP…PNAQCVKYEE (123 aa). One can recognise an IF rod domain in the interval 123-434; it reads EKEQIKCLNS…RLLEGEEQRL (312 aa). Positions 124–158 are coil 1A; the sequence is KEQIKCLNSKFAAFIDKVRFLEQQNKLLETKWQFY. Residues 159 to 168 are linker 1; the sequence is QNRKCCESNL. The interval 169–269 is coil 1B; the sequence is EPLFGGYIEA…YEEEVCVLQA (101 aa). Residue lysine 229 forms a Glycyl lysine isopeptide (Lys-Gly) (interchain with G-Cter in SUMO1) linkage. Residues 270–286 form a linker 12 region; sequence HISDTSVIVKMDNSRDL. The coil 2 stretch occupies residues 287-430; it reads NMDCVVAEIK…ATYRRLLEGE (144 aa). Residues 431–507 form a tail region; the sequence is EQRLCEGVGS…CGSSRSVRFA (77 aa).

Belongs to the intermediate filament family. Heterotetramer of two type I and two type II keratins.

The sequence is that of Keratin, type II cuticular Hb5 (Krt85) from Mus musculus (Mouse).